Consider the following 160-residue polypeptide: UPF0178 protein XC_1827 (160 aa).

The protein belongs to the UPF0178 family.

The chain is UPF0178 protein XC_1827 from Xanthomonas campestris pv. campestris (strain 8004).